Here is a 215-residue protein sequence, read N- to C-terminus: Sodium channel regulatory subunit beta-2 (215 aa).

A signal peptide spans 1–29; it reads MHRDAWLPRPAFSLTGLSLFFSLVPPGRS. Over 30-157 the chain is Extracellular; sequence MEVTAPTTLS…LEVPPERDST (128 aa). The Ig-like C2-type domain occupies 32 to 154; it reads VTAPTTLSVL…QVLLEVPPER (123 aa). Asn-42, Asn-66, and Asn-74 each carry an N-linked (GlcNAc...) asparagine glycan. Disulfide bonds link Cys-50–Cys-127 and Cys-72–Cys-75. A helical membrane pass occupies residues 158–179; that stretch reads VAVIVGASVGGFLAVVILVLMV. Residues 180-215 lie on the Cytoplasmic side of the membrane; the sequence is VKCVRRKKEQKLSTDDLKTEEEGKMDGEGNAEDGTK. The tract at residues 188 to 215 is disordered; sequence EQKLSTDDLKTEEEGKMDGEGNAEDGTK. Residues 189 to 215 show a composition bias toward basic and acidic residues; sequence QKLSTDDLKTEEEGKMDGEGNAEDGTK. Phosphoserine is present on Ser-192.

It belongs to the sodium channel auxiliary subunit SCN2B (TC 8.A.17) family. In terms of assembly, a voltage-gated sodium (Nav) channel consists of an ion-conducting pore-forming alpha subunit functional on its own that is regulated by one or more beta subunits. The beta subunit SCN2B is disulfide-linked to the pore-forming alpha subunit. Interacts with SCN1A; regulatory subunit of SCN1A/Nav1.1. Interacts with SCN2A; regulatory subunit of SCN2A/Nav1.2. Interacts with SCN3A; regulatory subunit of SCN3A/Nav1.3. Interacts with SCN5A; regulatory subunit of SCN5A/Nav1.5. Interacts with SCN8A; regulatory subunit of SCN8A/Nav1.6. Interacts with SCN9A; regulatory subunit of SCN9A/Nav1.7. Interacts with SCN10A; regulatory subunit of SCN10A/Nav1.8. Interacts with TNR; may play a crucial role in clustering and regulation of activity of SCN2B-containing Nav channels at nodes of Ranvier.

The protein resides in the cell membrane. The protein localises to the cell projection. It localises to the axon. Functionally, regulatory subunit of multiple voltage-gated sodium (Nav) channels directly mediating the depolarization of excitable membranes. Navs, also called VGSCs (voltage-gated sodium channels) or VDSCs (voltage-dependent sodium channels), operate by switching between closed and open conformations depending on the voltage difference across the membrane. In the open conformation they allow Na(+) ions to selectively pass through the pore, along their electrochemical gradient. The influx of Na+ ions provokes membrane depolarization, initiating the propagation of electrical signals throughout cells and tissues. The accessory beta subunits participate in localization and functional modulation of the Nav channels. Modulates the activity of SCN1A/Nav1.1, SCN2A/Nav1.2, SCN2A/Nav1.3, SCN5A/Nav1.5, SCN8A/Nav1.6, SCN9A/Nav1.7 and SCN10A/Nav1.8. This is Sodium channel regulatory subunit beta-2 from Mus musculus (Mouse).